The following is a 411-amino-acid chain: Putative glycosyltransferase SCO3672 (411 aa).

Transmembrane regions (helical) follow at residues 7-27 (IAAATVTATASFLLTAVLAAL), 45-65 (PVPLLGGVAVVLVTAVVAWAG), 70-90 (VVPLGPAAGRLLAAATVVGAL), 120-140 (ETGPVAGALAVGWVALVTGAF), 148-168 (GVVGTVGVVTAFGVGACAAVE), 169-189 (LMDGPAVLLLVLAAALAGFLL), 197-217 (IALGACGSLFTGFLLTGAAVL), 227-247 (GAGVLCALTAVPVADAVLVLL), 277-297 (GVVVVLGGAALCAVVVGVLAH), and 301-321 (VGGQAALWVAGGAAAGVLGLL).

Belongs to the glycosyltransferase 4 family.

It is found in the cell membrane. This Streptomyces coelicolor (strain ATCC BAA-471 / A3(2) / M145) protein is Putative glycosyltransferase SCO3672.